The following is a 74-amino-acid chain: Guanine nucleotide-binding protein G(T) subunit gamma-T1 (74 aa).

Cys71 carries the post-translational modification Cysteine methyl ester. A lipid anchor (S-farnesyl cysteine) is attached at Cys71. Residues 72 to 74 (VIS) constitute a propeptide, removed in mature form.

Belongs to the G protein gamma family. G proteins are composed of 3 units, alpha, beta and gamma. As to expression, retinal rod outer segment.

Its subcellular location is the cell membrane. Guanine nucleotide-binding proteins (G proteins) are involved as a modulator or transducer in various transmembrane signaling systems. The beta and gamma chains are required for the GTPase activity, for replacement of GDP by GTP, and for G protein-effector interaction. The polypeptide is Guanine nucleotide-binding protein G(T) subunit gamma-T1 (Gngt1) (Mus musculus (Mouse)).